The primary structure comprises 312 residues: Malate dehydrogenase (312 aa).

NAD(+) contacts are provided by residues 12-17 (GAGFTG) and D36. Substrate-binding residues include R87 and R93. Residues N100 and 123-125 (LTN) each bind NAD(+). N125 provides a ligand contact to substrate. The residue at position 149 (S149) is a Phosphoserine. R156 lines the substrate pocket. H180 functions as the Proton acceptor in the catalytic mechanism.

It belongs to the LDH/MDH superfamily. MDH type 3 family.

It carries out the reaction (S)-malate + NAD(+) = oxaloacetate + NADH + H(+). Functionally, catalyzes the reversible oxidation of malate to oxaloacetate. This chain is Malate dehydrogenase, found in Geobacillus thermodenitrificans.